A 170-amino-acid polypeptide reads, in one-letter code: Cysteine-rich uncharacterized protein 241L (170 aa).

The protein is Cysteine-rich uncharacterized protein 241L of Acheta domesticus (House cricket).